The chain runs to 312 residues: Ribosomal protein L11 methyltransferase (312 aa).

Residues threonine 162, glycine 183, aspartate 205, and asparagine 248 each coordinate S-adenosyl-L-methionine.

The protein belongs to the methyltransferase superfamily. PrmA family.

The protein localises to the cytoplasm. The catalysed reaction is L-lysyl-[protein] + 3 S-adenosyl-L-methionine = N(6),N(6),N(6)-trimethyl-L-lysyl-[protein] + 3 S-adenosyl-L-homocysteine + 3 H(+). Functionally, methylates ribosomal protein L11. This Bacillus anthracis (strain A0248) protein is Ribosomal protein L11 methyltransferase.